Consider the following 155-residue polypeptide: Endoribonuclease YbeY (155 aa).

Zn(2+) contacts are provided by H117, H121, and H127.

The protein belongs to the endoribonuclease YbeY family. Zn(2+) serves as cofactor.

The protein resides in the cytoplasm. Functionally, single strand-specific metallo-endoribonuclease involved in late-stage 70S ribosome quality control and in maturation of the 3' terminus of the 16S rRNA. The sequence is that of Endoribonuclease YbeY from Treponema denticola (strain ATCC 35405 / DSM 14222 / CIP 103919 / JCM 8153 / KCTC 15104).